Consider the following 120-residue polypeptide: Nitrogen regulatory protein GlnK1 (120 aa).

ADP contacts are provided by residues Thr40, 48-50, Val75, and 98-101; these read GEQ and GDGR. Residues Thr40, 48-50, Val75, and 98-101 each bind ATP; these read GEQ and GDGR.

The protein belongs to the P(II) protein family. In terms of assembly, homotrimer. Interacts and forms a complex with Amt1.

It localises to the cytoplasm. Functionally, involved in the regulation of nitrogen metabolism. Regulates the activity of its targets by protein-protein interaction in response to the nitrogen status of the cell. Regulates the activity of the ammonia channel Amt1 via direct interaction. This chain is Nitrogen regulatory protein GlnK1, found in Archaeoglobus fulgidus (strain ATCC 49558 / DSM 4304 / JCM 9628 / NBRC 100126 / VC-16).